A 416-amino-acid chain; its full sequence is Transmembrane protease serine 11B (416 aa).

Topologically, residues 1–17 (MYRHGISSQRSWPLWTT) are cytoplasmic. A helical; Signal-anchor for type II membrane protein membrane pass occupies residues 18-38 (IFIFLGVAAILGVTIGLLVHF). The Extracellular portion of the chain corresponds to 39 to 416 (LAVEKTYYYQ…RNWITSKTGL (378 aa)). The SEA domain maps to 43–160 (KTYYYQGDFH…ASIKLMEISK (118 aa)). Asn72 and Asn107 each carry an N-linked (GlcNAc...) asparagine glycan. In terms of domain architecture, Peptidase S1 spans 185 to 415 (IVNGKSSLEG…YRNWITSKTG (231 aa)). An intrachain disulfide couples Cys210 to Cys226. Catalysis depends on charge relay system residues His225 and Asp270. Asn315 is a glycosylation site (N-linked (GlcNAc...) asparagine). 2 cysteine pairs are disulfide-bonded: Cys335–Cys351 and Cys362–Cys391. Residue Ser366 is the Charge relay system of the active site.

It belongs to the peptidase S1 family.

The protein resides in the cell membrane. With respect to regulation, inhibited by aprotinin, leupeptin, benzamidine, SERPINA1, SPINT1 and SPINT2. Its function is as follows. Serine protease. This is Transmembrane protease serine 11B (TMPRSS11B) from Homo sapiens (Human).